A 349-amino-acid polypeptide reads, in one-letter code: S-adenosylmethionine:tRNA ribosyltransferase-isomerase (349 aa).

It belongs to the QueA family. Monomer.

The protein resides in the cytoplasm. It catalyses the reaction 7-aminomethyl-7-carbaguanosine(34) in tRNA + S-adenosyl-L-methionine = epoxyqueuosine(34) in tRNA + adenine + L-methionine + 2 H(+). It participates in tRNA modification; tRNA-queuosine biosynthesis. Functionally, transfers and isomerizes the ribose moiety from AdoMet to the 7-aminomethyl group of 7-deazaguanine (preQ1-tRNA) to give epoxyqueuosine (oQ-tRNA). This Pseudomonas putida (strain ATCC 700007 / DSM 6899 / JCM 31910 / BCRC 17059 / LMG 24140 / F1) protein is S-adenosylmethionine:tRNA ribosyltransferase-isomerase.